The chain runs to 947 residues: Leucine-rich repeat-containing protein 37B (947 aa).

The N-terminal stretch at 1–27 is a signal peptide; that stretch reads MSWLRFWGPWPLLTWQLLSLLVKEAQP. The Extracellular portion of the chain corresponds to 28-905; that stretch reads LVWVKDPLQL…EVPGDDYKNK (878 aa). Disordered regions lie at residues 42-88, 226-257, 294-458, and 484-514; these read LGPP…ALPQ, YLSM…QVGL, EVEP…PEPT, and SLTE…EQKA. The span at 311 to 320 shows a compositional bias: polar residues; sequence SMESLAQTPL. A glycan (N-linked (GlcNAc...) asparagine) is linked at Asn-358. 3 stretches are compositionally biased toward polar residues: residues 404–415, 436–445, and 495–507; these read GQAQHSHLTEAT, SPTTEETSAQ, and LESS…QSET. 6 LRR repeats span residues 556–577, 580–601, 604–625, 628–649, 655–676, and 679–699; these read IFTT…VWKA, WTEK…SFEG, YLQY…TFES, FLQY…TFQA, FLHN…YLFE, and ALKY…KNIL. N-linked (GlcNAc...) asparagine glycosylation is present at Asn-789. Positions 867-897 form a coiled coil; it reads DTDQQKTNYINENMEQNEQKEQKSSELMKEV. A helical transmembrane segment spans residues 906–926; it reads LIFAISVTVILIILIIIFCLI. At 927 to 947 the chain is on the cytoplasmic side; the sequence is EVNSHKRASEKYKDNPSISGA.

It localises to the membrane. This is Leucine-rich repeat-containing protein 37B (LRRC37B) from Homo sapiens (Human).